A 419-amino-acid polypeptide reads, in one-letter code: Phospho-N-acetylmuramoyl-pentapeptide-transferase (419 aa).

A run of 10 helical transmembrane segments spans residues 22-42, 72-92, 94-114, 135-155, 210-230, 238-258, 266-286, 303-323, 327-347, and 396-416; these read YVSF…TAIG, TPTM…LLCA, LNNI…ALGF, IVGQ…SPDV, AAWL…SNGA, GLAA…AYMS, FLNI…AAFI, FMGD…AIII, LLIP…MLQV, and KIVV…IVTL.

Belongs to the glycosyltransferase 4 family. MraY subfamily. It depends on Mg(2+) as a cofactor.

It is found in the cell inner membrane. It catalyses the reaction UDP-N-acetyl-alpha-D-muramoyl-L-alanyl-gamma-D-glutamyl-meso-2,6-diaminopimeloyl-D-alanyl-D-alanine + di-trans,octa-cis-undecaprenyl phosphate = di-trans,octa-cis-undecaprenyl diphospho-N-acetyl-alpha-D-muramoyl-L-alanyl-D-glutamyl-meso-2,6-diaminopimeloyl-D-alanyl-D-alanine + UMP. It functions in the pathway cell wall biogenesis; peptidoglycan biosynthesis. Its function is as follows. Catalyzes the initial step of the lipid cycle reactions in the biosynthesis of the cell wall peptidoglycan: transfers peptidoglycan precursor phospho-MurNAc-pentapeptide from UDP-MurNAc-pentapeptide onto the lipid carrier undecaprenyl phosphate, yielding undecaprenyl-pyrophosphoryl-MurNAc-pentapeptide, known as lipid I. The protein is Phospho-N-acetylmuramoyl-pentapeptide-transferase of Parabacteroides distasonis (strain ATCC 8503 / DSM 20701 / CIP 104284 / JCM 5825 / NCTC 11152).